The chain runs to 431 residues: uncharacterized protein (431 aa).

Disordered regions lie at residues 1 to 37 (MFWR…KLTP) and 102 to 132 (PPPL…RRVA). A compositionally biased stretch (basic and acidic residues) spans 22 to 32 (GDFRRSSDPRL). A compositionally biased stretch (low complexity) spans 106 to 121 (LSAGASRESAPRQPGP). Positions 122 to 132 (GERERPRRRVA) are enriched in basic and acidic residues.

It is found in the cytoplasm. This is an uncharacterized protein from Homo sapiens (Human).